Reading from the N-terminus, the 22-residue chain is MICOS complex subunit MIC60 (22 aa).

This sequence belongs to the MICOS complex subunit Mic60 family. In terms of assembly, component of the mitochondrial contact site and cristae organizing system (MICOS) complex, composed of at least MICOS10/MIC10, CHCHD3/MIC19, CHCHD6/MIC25, APOOL/MIC27, IMMT/MIC60, APOO/MIC23/MIC26 and MICOS13/MIC13. This complex was also known under the names MINOS or MitOS complex. The MICOS complex associates with mitochondrial outer membrane proteins SAMM50, MTX1 and MTX2 (together described as components of the mitochondrial outer membrane sorting assembly machinery (SAM) complex) and DNAJC11, mitochondrial inner membrane protein TMEM11 and with HSPA9. The MICOS and SAM complexes together with DNAJC11 are part of a large protein complex spanning both membranes termed the mitochondrial intermembrane space bridging (MIB) complex. Interacts with HSPA1A/HSPA1B and OPA1, preferentially with the soluble OPA1 form. Interacts with MICOS13/MIC13, MICOS10/MIC10, CHCHD3/MIC19, CHCHD6/MIC25, SAMM50 and TMEM11. Interacts with APOO/MIC23/MIC26 and APOOL/MIC27. Interacts with ARMC1. Interacts with ARMC12.

The protein localises to the mitochondrion inner membrane. It is found in the mitochondrion. Functionally, component of the MICOS complex, a large protein complex of the mitochondrial inner membrane that plays crucial roles in the maintenance of crista junctions, inner membrane architecture, and formation of contact sites to the outer membrane. Plays an important role in the maintenance of the MICOS complex stability and the mitochondrial cristae morphology. The polypeptide is MICOS complex subunit MIC60 (Mesocricetus auratus (Golden hamster)).